The primary structure comprises 2435 residues: ATP-binding cassette sub-family A member 2 (2435 aa).

Asparagine 14 carries N-linked (GlcNAc...) asparagine glycosylation. 2 helical membrane-spanning segments follow: residues 22–42 (PWVL…LLGL) and 54–74 (AFYT…QSLC). 3 N-linked (GlcNAc...) asparagine glycosylation sites follow: asparagine 89, asparagine 168, and asparagine 173. Glutamine 271 carries the post-translational modification N5-methylglutamine. 13 N-linked (GlcNAc...) asparagine glycosylation sites follow: asparagine 305, asparagine 368, asparagine 379, asparagine 420, asparagine 432, asparagine 476, asparagine 484, asparagine 494, asparagine 530, asparagine 544, asparagine 590, asparagine 600, and asparagine 628. The next 6 helical transmembrane spans lie at 699-719 (FLFV…VYSV), 750-770 (VAWF…LTAI), 782-802 (VVII…FCFL), 813-833 (ASAC…YVAI), 857-877 (AFGL…GIQW), and 893-913 (LLAV…TWYI). The ABC transporter 1 domain occupies 990-1221 (VCVDKLTKVY…YGDGYRLTLV (232 aa)). ATP is bound at residue 1024-1031 (GHNGAGKT). Disordered regions lie at residues 1223-1243 (RPAE…PGRA) and 1325-1357 (DQSL…GHAG). A phosphoserine mark is found at serine 1238, serine 1327, and serine 1331. The span at 1333–1342 (ADVKESRKDV) shows a compositional bias: basic and acidic residues. N-linked (GlcNAc...) asparagine glycosylation is present at asparagine 1408. Residues 1456-1476 (ALFSQILLPAFFVCVAMTVAL) form a helical membrane-spanning segment. Residues asparagine 1496, asparagine 1549, and asparagine 1557 are each glycosylated (N-linked (GlcNAc...) asparagine). The segment at 1586–1610 (SNFVPPPPSPAPSDSPASPDEDLQA) is disordered. Over residues 1589–1598 (VPPPPSPAPS) the composition is skewed to pro residues. N-linked (GlcNAc...) asparagine glycans are attached at residues asparagine 1612, asparagine 1677, and asparagine 1775. The next 5 membrane-spanning stretches (helical) occupy residues 1792-1812 (VVIA…FVVF), 1841-1861 (VWDM…LFVF), 1872-1892 (FPAV…IMYP), 1905-1925 (VFLI…TFLL), and 1991-2011 (GLVA…MCQY). The ABC transporter 2 domain maps to 2050–2285 (VKIENLTKVY…FGDGYMITVR (236 aa)). Asparagine 2054 carries N-linked (GlcNAc...) asparagine glycosylation. 2087 to 2094 (GVNGAGKT) contacts ATP. Position 2412 is a phosphothreonine (threonine 2412).

The protein belongs to the ABC transporter superfamily. ABCA family. Methylated at Gln-271 by N6AMT1. As to expression, highly expressed in the brain,peripheral blood leukocytes and ovary, whereas lower levels of expression is observed in kidney and liver. Weakly expressed in brain and highly in peripheral blood leukocytes.

The protein resides in the endosome membrane. The protein localises to the lysosome membrane. Functionally, probable lipid transporter that modulates cholesterol sequestration in the late endosome/lysosome by regulating the intracellular sphingolipid metabolism, in turn participates in cholesterol homeostasis. May alter the transbilayer distribution of ceramide in the intraluminal membrane lipid bilayer, favoring its retention in the outer leaflet that results in increased acid ceramidase activity in the late endosome/lysosome, facilitating ceramide deacylation to sphingosine leading to the sequestration of free cholesterol in lysosomes. In addition regulates amyloid-beta production either by activating a signaling pathway that regulates amyloid precursor protein transcription through the modulation of sphingolipid metabolism or through its role in gamma-secretase processing of APP. May play a role in myelin formation. This chain is ATP-binding cassette sub-family A member 2, found in Homo sapiens (Human).